The primary structure comprises 160 residues: Cyclic di-GMP-binding protein Smlt4090 (160 aa).

Residues Lys-33, Lys-132, Arg-134, Asp-135, and Asp-160 each contribute to the 3',3'-c-di-GMP site.

It belongs to the YajQ family.

Its function is as follows. Cyclic di-GMP effector that significantly contributes to virulence. Binds bis-(3',5')-cyclic diguanylate (cyclic di-GMP or c-di-GMP), an important bacterial second messenger that controls a wide range of cellular processes. The protein is Cyclic di-GMP-binding protein Smlt4090 of Stenotrophomonas maltophilia (strain K279a).